The sequence spans 299 residues: ATP phosphoribosyltransferase (299 aa).

This sequence belongs to the ATP phosphoribosyltransferase family. Long subfamily. In terms of assembly, equilibrium between an active dimeric form, an inactive hexameric form and higher aggregates. Interconversion between the various forms is largely reversible and is influenced by the natural substrates and inhibitors of the enzyme. Requires Mg(2+) as cofactor.

It localises to the cytoplasm. The enzyme catalyses 1-(5-phospho-beta-D-ribosyl)-ATP + diphosphate = 5-phospho-alpha-D-ribose 1-diphosphate + ATP. The protein operates within amino-acid biosynthesis; L-histidine biosynthesis; L-histidine from 5-phospho-alpha-D-ribose 1-diphosphate: step 1/9. With respect to regulation, feedback inhibited by histidine. Functionally, catalyzes the condensation of ATP and 5-phosphoribose 1-diphosphate to form N'-(5'-phosphoribosyl)-ATP (PR-ATP). Has a crucial role in the pathway because the rate of histidine biosynthesis seems to be controlled primarily by regulation of HisG enzymatic activity. The protein is ATP phosphoribosyltransferase of Blochmanniella floridana.